Consider the following 227-residue polypeptide: TMF-regulated nuclear protein 1 (227 aa).

Disordered stretches follow at residues 1–72 (MPGC…ELQR) and 200–227 (GRLR…SPQR). Pro residues predominate over residues 22-55 (SPPPPWDPMPSSQPPPPTPTLTPTPTPGQSPPLP).

Interacts with TMF1; may regulate TRNP1 proteasomal degradation. Ubiquitinated, leading to its degradation by the proteasome.

Its subcellular location is the nucleus. Functionally, DNA-binding factor that regulates the expression of a subset of genes and plays a key role in tangential, radial, and lateral expansion of the brain neocortex. Regulates neural stem cells proliferation and the production of intermediate neural progenitors and basal radial glial cells affecting the process of cerebral cortex gyrification. May control the proliferation rate of cells by regulating their progression through key cell-cycle transition points. The sequence is that of TMF-regulated nuclear protein 1 (TRNP1) from Homo sapiens (Human).